Consider the following 211-residue polypeptide: Methylthioribulose-1-phosphate dehydratase (211 aa).

Zn(2+) is bound by residues His105 and His107.

Belongs to the aldolase class II family. MtnB subfamily. Requires Zn(2+) as cofactor.

The enzyme catalyses 5-(methylsulfanyl)-D-ribulose 1-phosphate = 5-methylsulfanyl-2,3-dioxopentyl phosphate + H2O. It participates in amino-acid biosynthesis; L-methionine biosynthesis via salvage pathway; L-methionine from S-methyl-5-thio-alpha-D-ribose 1-phosphate: step 2/6. In terms of biological role, catalyzes the dehydration of methylthioribulose-1-phosphate (MTRu-1-P) into 2,3-diketo-5-methylthiopentyl-1-phosphate (DK-MTP-1-P). This chain is Methylthioribulose-1-phosphate dehydratase, found in Acidiphilium cryptum (strain JF-5).